Here is a 486-residue protein sequence, read N- to C-terminus: MRDDRERGEGDLSWPLIGEKSSVKEEVKKQLWLSGPLIAVSLLQFCLQVISVMFVGHLGSLPLSAASIATSFASVTGFSFLMGTASALDTLCGQAYGAKKYGMLGIQMQRAMFVLTLASIPLSIIWANTEHLLVFFGQNKSIATLAGSYAKFMIPSIFAYGLLQCFNRFLQAQNNVFPVVFCSGVTTSLHVLLCWVLVFKSGLGFQGAALANSISYWLNVVLLFCYVKFSPSCSLTWTGFSKEALRDILPFLRLAVPSALMVCLEMWSFELLVLLSGLLPNPVLETSVLSICLNTSGTMWMIPFGLSGAASTRISNELGAGNPKVAKLAVRVVICIAVAESIVIGSVLILIRNIWGLAYSSELEVVSYVASMMPILALGNFLDSLQCVLSGVARGCGWQKIGAIINLGSYYLVGVPSGLLLAFHFHVGGRGLWLGIICALVVQVFGLGLVTIFTNWDEEAKKATNRIESSSSVKDFAVDDRSVVVF.

Transmembrane regions (helical) follow at residues 35–55 (GPLIAVSLLQFCLQVISVMFV), 68–88 (IATSFASVTGFSFLMGTASAL), 117–137 (LASIPLSIIWANTEHLLVFFG), 142–162 (IATLAGSYAKFMIPSIFAYGL), 179–199 (VVFCSGVTTSLHVLLCWVLVF), 207–227 (GAALANSISYWLNVVLLFCYV), 259–279 (ALMVCLEMWSFELLVLLSGLL), 288–308 (VLSICLNTSGTMWMIPFGLSG), 331–351 (RVVICIAVAESIVIGSVLILI), 365–385 (VVSYVASMMPILALGNFLDSL), 401–421 (IGAIINLGSYYLVGVPSGLLL), and 433–453 (WLGIICALVVQVFGLGLVTIF).

The protein belongs to the multi antimicrobial extrusion (MATE) (TC 2.A.66.1) family.

The protein localises to the membrane. The sequence is that of Protein DETOXIFICATION 16 from Arabidopsis thaliana (Mouse-ear cress).